A 150-amino-acid chain; its full sequence is Ribonuclease HI (150 aa).

The RNase H type-1 domain occupies 1–141; that stretch reads MKSINAYTDG…VDVLARGQAM (141 aa). 4 residues coordinate Mg(2+): D9, E47, D69, and D133.

Belongs to the RNase H family. Monomer. It depends on Mg(2+) as a cofactor.

Its subcellular location is the cytoplasm. It catalyses the reaction Endonucleolytic cleavage to 5'-phosphomonoester.. Its function is as follows. Endonuclease that specifically degrades the RNA of RNA-DNA hybrids. This is Ribonuclease HI from Xylella fastidiosa (strain 9a5c).